The primary structure comprises 625 residues: Phosphomethylpyrimidine synthase (625 aa).

Substrate is bound by residues Asn231, Met260, Tyr289, His325, 345-347, 386-389, and Glu425; these read SRG and DGLR. His429 is a Zn(2+) binding site. Tyr452 lines the substrate pocket. His493 is a Zn(2+) binding site. Cys573, Cys576, and Cys581 together coordinate [4Fe-4S] cluster.

Belongs to the ThiC family. In terms of assembly, homodimer. The cofactor is [4Fe-4S] cluster.

It carries out the reaction 5-amino-1-(5-phospho-beta-D-ribosyl)imidazole + S-adenosyl-L-methionine = 4-amino-2-methyl-5-(phosphooxymethyl)pyrimidine + CO + 5'-deoxyadenosine + formate + L-methionine + 3 H(+). It participates in cofactor biosynthesis; thiamine diphosphate biosynthesis. Its function is as follows. Catalyzes the synthesis of the hydroxymethylpyrimidine phosphate (HMP-P) moiety of thiamine from aminoimidazole ribotide (AIR) in a radical S-adenosyl-L-methionine (SAM)-dependent reaction. The sequence is that of Phosphomethylpyrimidine synthase from Acinetobacter baumannii (strain AB0057).